Here is a 513-residue protein sequence, read N- to C-terminus: MAVHQEKLYPNCDSGVWLRSCEEEVTEPLEGTITGEIPSWLQGSLLRNGPGSLKVGSMRFEHLFDSSALLHRFAINDGSVTYQCRFLQSNTFKKNRAAERIVVTEFGTRAVPDPCHTIFDRVAALFKPGESLSDNAMISLYPFGDEIYAFTEGPVIHRIDPETLDTLERRNLMDSVSLVNHTSHPHVMPNGDVYNLGMSIVQGRLKHVIVKFPYTEKGDMFAKAHIVANMSPRWPLHPAYMHTFGITENYFVIVEQPLSVSLLTMVKSQPSNEPLASSLHWYPNHETHIVLLSRRDGKEVKRYRTEPLFYLHIINAYEHDGVLVVDLCAYKDAKAIDAMYINAIETMQSNADYAEWFRGRPKRLELPLNATNCSRIEPRLLAQLGCETPRIHYDLYNGRPYRYFYAISSDVDAANPGTIIKVDTKTGETKTWCDTNCYPSEPIFVPAPGATEEDDGVILSALVWGGAGAHCRRVALLVLEARGLRELARATFCAPSPVPKCLHGWFLPRRTQL.

Fe cation-binding residues include His184, His242, His312, and His503.

This sequence belongs to the carotenoid oxygenase family. Fe(2+) serves as cofactor.

It carries out the reaction all-trans-zeaxanthin + O2 = (3R)-11-cis-3-hydroxyretinal + (3R)-all-trans-3-hydroxyretinal. It participates in cofactor metabolism; retinol metabolism. Catalyzes the oxidative cleavage at the 15,15'-double bond of carotenoids and the simultaneous all-trans to 11-cis isomerization of one cleavage product. Carotenoids like 11-cis retinal can promote visual pigment biogenesis in the dark. Essential for the biosynthesis of the 3-hydroxyretinal chromophore of rhodopsin from zeaxanthin and for proper photoreceptor development. This chain is Carotenoid isomerooxygenase (ninaB), found in Galleria mellonella (Greater wax moth).